Reading from the N-terminus, the 620-residue chain is Zinc finger protein GLIS1 (620 aa).

The interval 108 to 132 is disordered; it reads PLTGDLGGPSKRARPGPASTDSHEG. The C2H2-type 1 zinc finger occupies 195–220; the sequence is QACRWVDCCAAYEQQEELVRHIEKSH. The C2H2-type 2; atypical zinc finger occupies 229–256; sequence FTCFWAGCVRRYKPFNARYKLLIHMRVH. 3 C2H2-type zinc fingers span residues 262–286, 292–316, and 322–346; these read NKCMFEGCSKAFSRLENLKIHLRSH, YLCQHPGCQKAFSNSSDRAKHQRTH, and YACQIPGCSKRYTDPSSLRKHVKAH. Positions 340-356 match the Bipartite nuclear localization signal motif; the sequence is RKHVKAHSAKEQQVRKK. The disordered stretch occupies residues 414–515; sequence ASGLLPPAHD…PPLPSPQGYQ (102 aa). Positions 477-488 are enriched in low complexity; sequence SSQSHSPGGQPF. Residues 489 to 510 are compositionally biased toward pro residues; that stretch reads PTLPSKPSYPPFQSPPPPPLPS.

The protein belongs to the GLI C2H2-type zinc-finger protein family. In terms of assembly, interacts with KLF4. Interacts with POU5F1 and/or POU5F1B. Interacts with SOX2.

It is found in the nucleus. Functionally, acts both as a repressor and an activator of transcription. Binds to the consensus sequence 5'-GACCACCCAC-3'. By controlling the expression of genes involved in cell differentiation inhibits the lineage commitment of multipotent cells. Prevents, for instance, the differentiation of multipotent mesenchymal cells into adipocyte and osteoblast. The protein is Zinc finger protein GLIS1 of Homo sapiens (Human).